The following is a 542-amino-acid chain: Glucans biosynthesis protein G (542 aa).

A signal peptide spans 1–34; sequence MVSLLRCPSSKPYSSLICSLTLGAVVALSGVAYA.

The protein belongs to the OpgD/OpgG family.

The protein localises to the periplasm. It participates in glycan metabolism; osmoregulated periplasmic glucan (OPG) biosynthesis. Functionally, involved in the biosynthesis of osmoregulated periplasmic glucans (OPGs). The protein is Glucans biosynthesis protein G of Shewanella baltica (strain OS223).